The following is a 111-amino-acid chain: Ciprofloxacin tolerance protein (111 aa).

Residues Met1–Asn5 lie on the Periplasmic side of the membrane. The helical transmembrane segment at Phe6–Pro26 threads the bilayer. Residues Tyr27–Trp30 lie on the Cytoplasmic side of the membrane. The helical transmembrane segment at Leu31 to Val51 threads the bilayer. Over Gln52 to Pro58 the chain is Periplasmic. The chain crosses the membrane as a helical span at residues Val59–Leu79. Residues Arg80 to Arg111 are Cytoplasmic-facing.

The protein resides in the cell inner membrane. Functionally, may play a role in cellular filamentation, especially in response to ciprofloxacin. Increased expression confers tolerance to the antibiotic ciprofloxacin. This chain is Ciprofloxacin tolerance protein, found in Acinetobacter baumannii.